The following is a 295-amino-acid chain: Ethanolamine ammonia-lyase small subunit (295 aa).

Residues V209 and E230 each contribute to the adenosylcob(III)alamin site.

This sequence belongs to the EutC family. As to quaternary structure, the basic unit is a heterodimer which dimerizes to form tetramers. The heterotetramers trimerize; 6 large subunits form a core ring with 6 small subunits projecting outwards. Adenosylcob(III)alamin serves as cofactor.

It localises to the bacterial microcompartment. The enzyme catalyses ethanolamine = acetaldehyde + NH4(+). It functions in the pathway amine and polyamine degradation; ethanolamine degradation. Functionally, catalyzes the deamination of various vicinal amino-alcohols to oxo compounds. Allows this organism to utilize ethanolamine as the sole source of nitrogen and carbon in the presence of external vitamin B12. This chain is Ethanolamine ammonia-lyase small subunit, found in Clostridium perfringens (strain ATCC 13124 / DSM 756 / JCM 1290 / NCIMB 6125 / NCTC 8237 / Type A).